The following is a 182-amino-acid chain: ATP-dependent protease subunit HslV (182 aa).

Threonine 10 is an active-site residue. Alanine 166, cysteine 169, and serine 172 together coordinate Na(+).

Belongs to the peptidase T1B family. HslV subfamily. In terms of assembly, a double ring-shaped homohexamer of HslV is capped on each side by a ring-shaped HslU homohexamer. The assembly of the HslU/HslV complex is dependent on binding of ATP.

It localises to the cytoplasm. The catalysed reaction is ATP-dependent cleavage of peptide bonds with broad specificity.. Allosterically activated by HslU binding. Its function is as follows. Protease subunit of a proteasome-like degradation complex believed to be a general protein degrading machinery. The sequence is that of ATP-dependent protease subunit HslV from Rickettsia prowazekii (strain Madrid E).